Reading from the N-terminus, the 723-residue chain is Hypoxia-inducible factor prolyl hydroxylase (723 aa).

8 residues coordinate Zn(2+): Cys-39, Cys-42, Cys-54, Cys-57, Cys-63, His-67, His-75, and Cys-79. The segment at Cys-39–Cys-79 adopts an MYND-type; atypical zinc-finger fold. Over residues Pro-249–Ser-270 the composition is skewed to low complexity. Disordered stretches follow at residues Pro-249–Thr-275 and Ile-294–Tyr-323. Residues Gly-468–Asp-566 form the Fe2OG dioxygenase domain. Fe cation contacts are provided by His-487, Asp-489, and His-548. Residue Arg-557 coordinates 2-oxoglutarate. The interval Arg-678 to Ile-723 is disordered. Positions Asp-687–Ser-699 are enriched in basic and acidic residues.

Interacts (via catalytic domain) with lin-10 (via N-terminus); the interaction regulates lin-10 subcellular localization; the interaction is direct. Interacts (via catalytic domain) with swan-1 (via WD 1-3 repeats); the interaction may regulate vhl-1-independent hif-1 transcriptional activity; the interaction is direct. Interacts (via C-terminus) with cysl-1; the interaction is enhanced by hydrogen disulfide and activates hif-1-mediated transcription; the interaction is direct. Fe(2+) serves as cofactor. Requires L-ascorbate as cofactor. In terms of tissue distribution, in larvae and adults, expressed in pharyngeal and body wall muscles.

It localises to the cytoplasm. It is found in the nucleus. Its subcellular location is the cell projection. The protein localises to the dendrite. The protein resides in the axon. The catalysed reaction is L-prolyl-[hypoxia-inducible factor alpha subunit] + 2-oxoglutarate + O2 = trans-4-hydroxy-L-prolyl-[hypoxia-inducible factor alpha subunit] + succinate + CO2. Its activity is regulated as follows. Inhibited by Co(2+) and dimethyloxalylglycine. Inhibited by the iron chelator 2, 2'-dipyridyl. Functionally, cellular oxygen sensor which regulates the stability and the activity of hypoxia-inducible transcription factor, hif-1. In normoxic conditions, hydroxylates hif-1 targeting it for vhl-1-mediated proteasomal degradation. In addition, regulates hif-1 transcriptional activity in a vhl-1-independent manner and independently of its hydroxylase activity. By regulating hif-1 activity, controls several cellular responses. Mediates susceptibility to B.thuringiensis and V.cholerae pore-forming toxins and enteropathogenic E.coli. Mediates susceptibility to P.aeruginosa PAO1-mediated killing by regulating resistance to cyanide produced by P.aeruginosa. Mediates resistance to S.aureus-mediated killing. In addition, plays a role in heat acclimation, neuronal development, behavioral responses to reoxygenation and hydrogen sulfide, iron homeostasis and aging. In neurons, involved in mitochondrion fusion during reoxygenation. Involved in egg laying. Regulates the trafficking of the glutamate receptor glr-1, probably independently of hif-1, by regulating lin-10 subcellular localization in response to oxygen levels. May hydroxylate lin-10. The protein is Hypoxia-inducible factor prolyl hydroxylase of Caenorhabditis elegans.